A 210-amino-acid chain; its full sequence is Cell division protein FtsQ (210 aa).

In terms of domain architecture, POTRA spans 1 to 58; that stretch reads LQTSEIEVFQLLGLDGSTSLIALDIDAARRKLVQLPWVEDVDIRKVYPKTVEVRLKER. A helical membrane pass occupies residues 8–25; sequence VFQLLGLDGSTSLIALDI.

This sequence belongs to the FtsQ/DivIB family. FtsQ subfamily.

The protein localises to the cell inner membrane. Essential cell division protein. The sequence is that of Cell division protein FtsQ from Rhizobium radiobacter (Agrobacterium tumefaciens).